The chain runs to 973 residues: Ras-related protein Rab-44 (973 aa).

Over residues 1 to 21 (MEKGKGVSRKGRKLASSRRRQ) the composition is skewed to basic residues. Residues 1–42 (MEKGKGVSRKGRKLASSRRRQAREPADGQDAPVAAEAESWPS) form a disordered region. The 35-residue stretch at 77–111 (GGEEPQMIFDWVDVESRGHLSLEEFSSGLKNVFGS) folds into the EF-hand domain. Residues 112 to 140 (SPGTHRLRTKRSLPSQRESVTSTLPVPEE) are disordered. The segment covering 123–135 (SLPSQRESVTSTL) has biased composition (polar residues). A coiled-coil region spans residues 219-310 (LYKVRQLYEE…ERDLAGQLEE (92 aa)). Disordered regions lie at residues 319-368 (RGHL…FGNN), 421-481 (FSQE…GSFL), 493-708 (GTVE…GLAV), and 724-779 (EAQP…GKPQ). Positions 428 to 440 (DPDPGPRGSPEVP) are enriched in pro residues. Residues 445–457 (KDGKGVEDPKGQD) are compositionally biased toward basic and acidic residues. The span at 513–524 (GLSSSPQSPAGS) shows a compositional bias: low complexity. Basic and acidic residues-rich tracts occupy residues 548 to 559 (SLEREVMAEDLK), 598 to 608 (HLARQESHAKG), and 654 to 663 (SESHGLEARS). Residues 665-680 (ESPQQDDPLPNTSQPP) are compositionally biased toward polar residues. The segment covering 750–766 (AESRPEDPRTDLQEAER) has biased composition (basic and acidic residues). GTP-binding positions include 792-799 (GDSNVGKT), 840-844 (DTAGQ), and 898-901 (NKMD). 2 S-geranylgeranyl cysteine lipidation sites follow: C971 and C972.

The protein belongs to the small GTPase superfamily. Rab family.

It is found in the cell membrane. In Mus musculus (Mouse), this protein is Ras-related protein Rab-44 (Rab44).